We begin with the raw amino-acid sequence, 151 residues long: uncharacterized protein (151 aa).

The segment at 1 to 24 (MHAKTKKLGTDTSYKRPQVTAQEQ) is disordered.

This is an uncharacterized protein from Acanthamoeba polyphaga mimivirus (APMV).